Consider the following 224-residue polypeptide: Octanoyltransferase (224 aa).

Positions 38–213 constitute a BPL/LPL catalytic domain; that stretch reads SATVDELWWV…YLVRRLGYSA (176 aa). Substrate contacts are provided by residues 77 to 84, 144 to 146, and 157 to 159; these read RGGQVTYH, SLG, and GLS. Residue Cys175 is the Acyl-thioester intermediate of the active site.

The protein belongs to the LipB family.

The protein localises to the cytoplasm. The enzyme catalyses octanoyl-[ACP] + L-lysyl-[protein] = N(6)-octanoyl-L-lysyl-[protein] + holo-[ACP] + H(+). Its pathway is protein modification; protein lipoylation via endogenous pathway; protein N(6)-(lipoyl)lysine from octanoyl-[acyl-carrier-protein]: step 1/2. Its function is as follows. Catalyzes the transfer of endogenously produced octanoic acid from octanoyl-acyl-carrier-protein onto the lipoyl domains of lipoate-dependent enzymes. Lipoyl-ACP can also act as a substrate although octanoyl-ACP is likely to be the physiological substrate. The polypeptide is Octanoyltransferase (Nitrosococcus oceani (strain ATCC 19707 / BCRC 17464 / JCM 30415 / NCIMB 11848 / C-107)).